The following is a 246-amino-acid chain: Bromelain inhibitor (246 aa).

Positions 1-19 are cleaved as a signal peptide; sequence MNMLLLFLHEVINGERVTL. 5 disulfides stabilise this stretch: cysteine 22–cysteine 42, cysteine 25–cysteine 74, cysteine 27–cysteine 40, cysteine 49–cysteine 56, and cysteine 53–cysteine 65. A propeptide spanning residues 31–35 is cleaved from the precursor; it reads TSSSD. 2 consecutive propeptides follow at residues 77-95 and 107-111; these read PVSS…RVTL and TSSSD. Intrachain disulfides connect cysteine 98–cysteine 118, cysteine 101–cysteine 150, cysteine 103–cysteine 116, cysteine 125–cysteine 132, and cysteine 129–cysteine 141. 2 propeptides span residues 153-171 and 183-187; these read PVSS…RVTL and TSSSD. Cystine bridges form between cysteine 174-cysteine 194, cysteine 177-cysteine 226, cysteine 179-cysteine 192, cysteine 201-cysteine 208, and cysteine 205-cysteine 217. A propeptide spanning residues 229-246 is cleaved from the precursor; it reads PVSSWEARQKIKLLQGRE.

Belongs to the protease inhibitor I67 family. As to quaternary structure, each inhibitor is composed of two chains, designated A and B linked by three disulfide bonds.

Functionally, weak inhibitor of cysteine proteinases. The protein is Bromelain inhibitor of Ananas comosus (Pineapple).